Reading from the N-terminus, the 362-residue chain is 3-dehydroquinate synthase (362 aa).

NAD(+)-binding positions include 72–77, 106–110, 130–131, K143, K152, and 170–173; these read DGEQYK, GVVGD, TT, and CLKT. Zn(2+)-binding residues include E185, H248, and H265.

This sequence belongs to the sugar phosphate cyclases superfamily. Dehydroquinate synthase family. Co(2+) serves as cofactor. Requires Zn(2+) as cofactor. It depends on NAD(+) as a cofactor.

Its subcellular location is the cytoplasm. The catalysed reaction is 7-phospho-2-dehydro-3-deoxy-D-arabino-heptonate = 3-dehydroquinate + phosphate. Its pathway is metabolic intermediate biosynthesis; chorismate biosynthesis; chorismate from D-erythrose 4-phosphate and phosphoenolpyruvate: step 2/7. Catalyzes the conversion of 3-deoxy-D-arabino-heptulosonate 7-phosphate (DAHP) to dehydroquinate (DHQ). This Aliivibrio fischeri (strain ATCC 700601 / ES114) (Vibrio fischeri) protein is 3-dehydroquinate synthase.